The following is a 125-amino-acid chain: Neuraminyllactose-binding hemagglutinin (125 aa).

An N-acetyl-neuraminyl-alpha(2,3)-lactose binding motif region spans residues 92-97 (KRTIQK).

It localises to the cell outer membrane. This is Neuraminyllactose-binding hemagglutinin (hpaA) from Helicobacter pylori (Campylobacter pylori).